A 62-amino-acid polypeptide reads, in one-letter code: Protein DsrB (62 aa).

This sequence belongs to the DsrB family.

This Enterobacter sp. (strain 638) protein is Protein DsrB.